Consider the following 87-residue polypeptide: uncharacterized protein (87 aa).

The helical transmembrane segment at 25 to 47 (FFWEVCNMILFIIIALCGYLLFS) threads the bilayer.

Its subcellular location is the membrane. This is an uncharacterized protein from Bacillus subtilis (strain 168).